Here is a 388-residue protein sequence, read N- to C-terminus: Succinate--CoA ligase [ADP-forming] subunit beta (388 aa).

The ATP-grasp domain maps to 9–245 (KALLKEYGMP…KSQENERELK (237 aa)). ATP is bound by residues K46, 53-55 (GRG), E100, Y103, and E108. N200 and D214 together coordinate Mg(2+). Substrate is bound by residues N265 and 322–324 (GIV).

It belongs to the succinate/malate CoA ligase beta subunit family. Heterotetramer of two alpha and two beta subunits. The cofactor is Mg(2+).

The enzyme catalyses succinate + ATP + CoA = succinyl-CoA + ADP + phosphate. The catalysed reaction is GTP + succinate + CoA = succinyl-CoA + GDP + phosphate. Its pathway is carbohydrate metabolism; tricarboxylic acid cycle; succinate from succinyl-CoA (ligase route): step 1/1. In terms of biological role, succinyl-CoA synthetase functions in the citric acid cycle (TCA), coupling the hydrolysis of succinyl-CoA to the synthesis of either ATP or GTP and thus represents the only step of substrate-level phosphorylation in the TCA. The beta subunit provides nucleotide specificity of the enzyme and binds the substrate succinate, while the binding sites for coenzyme A and phosphate are found in the alpha subunit. The protein is Succinate--CoA ligase [ADP-forming] subunit beta of Acinetobacter baumannii (strain SDF).